The sequence spans 512 residues: Gustatory and odorant receptor 63a (512 aa).

The segment at 1–24 (MRPSGEKVVKGHGQGNSGHSLSGM) is disordered. Residues 1-129 (MRPSGEKVVK…PARAKFEMNS (129 aa)) are Cytoplasmic-facing. Residues 130–150 (ASFIYSVVFFVLLACYVGYVA) traverse the membrane as a helical segment. The Extracellular segment spans residues 151–166 (NNRIHIVRSLSGPFEE). Residues 167 to 187 (AVIAYLFLVNILPIMIIPILW) traverse the membrane as a helical segment. The Cytoplasmic segment spans residues 188–222 (YEARKIAKLFNDWDDFEVLYYQISGHSLPLKLRQK). A helical transmembrane segment spans residues 223-243 (AVYIAIVLPILSVLSVVITHV). At 244 to 265 (TMSDLNINQVVPYCILDNLTAM) the chain is on the extracellular side. An N-linked (GlcNAc...) asparagine glycan is attached at Asn-261. A helical transmembrane segment spans residues 266 to 285 (LGAWWFLICEAMSITAHLLA). At 286–324 (ERFQKALKHIGPAAMVADYRVLWLRLSKLTRDTGNALCY) the chain is on the cytoplasmic side. A helical membrane pass occupies residues 325–345 (TFVFMSLYLFFIITLSIYGLM). At 346 to 350 (SQLSE) the chain is on the extracellular side. Residues 351 to 371 (GFGIKDIGLTITALWNIGLLF) traverse the membrane as a helical segment. Over 372–436 (YICDEAHYAS…FFDVNRTLFK (65 aa)) the chain is Cytoplasmic. A helical transmembrane segment spans residues 437 to 457 (GLLTTMVTYLVVLLQFQISIP). Topologically, residues 458–512 (TDKGDSEGANNITVVDFVMDSLDNDMSLMGASTLSTTTVGTTLPPPIMKLKGRKG) are extracellular. N-linked (GlcNAc...) asparagine glycosylation occurs at Asn-468.

The protein belongs to the insect chemoreceptor superfamily. Gustatory receptor (GR) family. Gr21a subfamily. Gr21a and Gr63a probably form a heterodimer that responds to CO(2). In terms of tissue distribution, expressed in the medial aspect of the third antennal segment. Carbon dioxide-responsive neurons coexpress Gr21a and Gr63a in a pair of chemosensory receptors at both larval and adult life stages.

The protein localises to the cell membrane. In terms of biological role, gustatory and odorant receptor which mediates acceptance or avoidance behavior, depending on its substrates. Gr21a and Gr63a together are sufficient for carbon dioxide detection and avoidance behavior. It is possible that the CO(2) receptors Gr63a and Gr21a activate the TRPC channels through Galpha49B and Plc21C. This innate olfactory avoidance behavior can be inhibited by inhibitory interactions of the odors such as 1-hexanol and 2,3-butanedione with Gr21a and Gr63a. The polypeptide is Gustatory and odorant receptor 63a (Gr63a) (Drosophila melanogaster (Fruit fly)).